The primary structure comprises 249 residues: Metal-staphylopine import system ATP-binding protein CntF (249 aa).

Residues 2 to 244 form the ABC transporter domain; sequence IKVTDVEKSY…DNAYTRELIE (243 aa). ATP is bound at residue 42–49; sequence GESGSGKS.

It belongs to the ABC transporter superfamily. The complex is composed of two ATP-binding proteins (CntD and CntF), two transmembrane proteins (CntB and CntC) and a solute-binding protein (CntA).

It localises to the cell membrane. Part of the ABC transporter complex CntABCDF (Opp1) involved in the uptake of metal in complex with the metallophore staphylopine (StP). May be involved in the import of a large array of divalent metals ions such as nickel, cobalt, zinc, copper and iron. Probably responsible for energy coupling to the transport system. This is Metal-staphylopine import system ATP-binding protein CntF from Staphylococcus aureus (strain Mu50 / ATCC 700699).